The sequence spans 747 residues: Elongation factor G, mitochondrial (747 aa).

The transit peptide at 1 to 32 (MTLITRVLNGNLPLRLSTLKAARQLQCGYSSH) directs the protein to the mitochondrion. The 278-residue stretch at 42–319 (ERIRNIGISA…AVVDYLPNPG (278 aa)) folds into the tr-type G domain. GTP is bound by residues 51–58 (AHIDSGKT), 118–122 (DTPGH), and 172–175 (NKLD).

Belongs to the TRAFAC class translation factor GTPase superfamily. Classic translation factor GTPase family. EF-G/EF-2 subfamily.

The protein resides in the mitochondrion. The protein operates within protein biosynthesis; polypeptide chain elongation. Mitochondrial GTPase that catalyzes the GTP-dependent ribosomal translocation step during translation elongation. During this step, the ribosome changes from the pre-translocational (PRE) to the post-translocational (POST) state as the newly formed A-site-bound peptidyl-tRNA and P-site-bound deacylated tRNA move to the P and E sites, respectively. Catalyzes the coordinated movement of the two tRNA molecules, the mRNA and conformational changes in the ribosome. Essential during development as it acts as a retrograde signal from mitochondria to the nucleus to slow down cell proliferation if mitochondrial energy output is low. The sequence is that of Elongation factor G, mitochondrial from Drosophila mojavensis (Fruit fly).